A 337-amino-acid chain; its full sequence is Anaerobic sulfite reductase subunit C (337 aa).

[4Fe-4S] cluster contacts are provided by Cys-115, Cys-121, Cys-153, Cys-157, Cys-180, Cys-183, Cys-186, Cys-190, Cys-212, Cys-215, Cys-218, and Cys-222. Cys-157 lines the siroheme pocket. 2 4Fe-4S ferredoxin-type domains span residues Ala-171–Leu-200 and Gly-203–Asp-232.

This sequence belongs to the nitrite and sulfite reductase 4Fe-4S domain family. The anaerobic sulfite reductase seems to consist of three subunits. [4Fe-4S] cluster is required as a cofactor. Siroheme serves as cofactor.

It is found in the cytoplasm. The enzyme catalyses hydrogen sulfide + 3 NAD(+) + 3 H2O = sulfite + 3 NADH + 4 H(+). The protein operates within sulfur metabolism; sulfite reduction. This enzyme catalyzes the hydrogen sulfide production from sulfite. It is strictly anaerobic. It is regulated by electron acceptors rather than by cysteine. This Salmonella typhi protein is Anaerobic sulfite reductase subunit C (asrC).